The following is a 255-amino-acid chain: Homeobox-leucine zipper protein ATHB-23 (255 aa).

A DNA-binding region (homeobox) is located at residues 68-127 (MGEKKRRLNMEQLKALEKDFELGNKLESDRKLELARALGLQPRQIAIWFQNRRARSKTKQ). The segment at 128–163 (LEKDYDMLKRQFESLRDENEVLQTQNQKLQAQVMAL) is leucine-zipper.

Belongs to the HD-ZIP homeobox family. Class I subfamily. In terms of tissue distribution, expressed in young leaves, in the adaxial domain of leaf primordia and the rib meristem. Expressed in the styles of flowers and siliques.

The protein resides in the nucleus. Functionally, probable transcription factor. The sequence is that of Homeobox-leucine zipper protein ATHB-23 (ATHB-23) from Arabidopsis thaliana (Mouse-ear cress).